Reading from the N-terminus, the 222-residue chain is MRTAYHEQLSELSERLSEMCGLAGIAMERATQALLQADLMLAEQVITDHEKIATRSARAEESAFVLLALQAPVAGDLRAIVSAIQMVAAIDRMGALALHVAKTARRRHPQHVLPEEVNGYFAEIGRVAVELGNGAQEVVLSRDPEKAAQIREKDDAMDELHRHLFSVLMDREWKHGVAAAVDVTLLGRFYERFADHAVEVARRVIFQATGSFPEDDTVPGSR.

The protein belongs to the PhoU family. Homodimer.

It localises to the cytoplasm. Its function is as follows. Plays a role in the regulation of phosphate uptake. The sequence is that of Phosphate-specific transport system accessory protein PhoU homolog 1 (phoU1) from Mycobacterium leprae (strain TN).